The sequence spans 433 residues: 3-phosphoshikimate 1-carboxyvinyltransferase (433 aa).

3-phosphoshikimate is bound by residues Lys15, Ser16, and Arg20. Lys15 contacts phosphoenolpyruvate. Phosphoenolpyruvate contacts are provided by Gly96 and Arg124. Positions 169, 171, 318, and 345 each coordinate 3-phosphoshikimate. Gln171 is a binding site for phosphoenolpyruvate. Asp318 functions as the Proton acceptor in the catalytic mechanism. 2 residues coordinate phosphoenolpyruvate: Arg349 and Arg393.

Belongs to the EPSP synthase family. In terms of assembly, monomer.

The protein localises to the cytoplasm. It catalyses the reaction 3-phosphoshikimate + phosphoenolpyruvate = 5-O-(1-carboxyvinyl)-3-phosphoshikimate + phosphate. Its pathway is metabolic intermediate biosynthesis; chorismate biosynthesis; chorismate from D-erythrose 4-phosphate and phosphoenolpyruvate: step 6/7. In terms of biological role, catalyzes the transfer of the enolpyruvyl moiety of phosphoenolpyruvate (PEP) to the 5-hydroxyl of shikimate-3-phosphate (S3P) to produce enolpyruvyl shikimate-3-phosphate and inorganic phosphate. This is 3-phosphoshikimate 1-carboxyvinyltransferase from Chlorobium phaeovibrioides (strain DSM 265 / 1930) (Prosthecochloris vibrioformis (strain DSM 265)).